The chain runs to 332 residues: NAD-dependent protein deacetylase hst2 (332 aa).

The 263-residue stretch at 7–269 (KHVDSSKHLE…RALCKLLGWS (263 aa)) folds into the Deacetylase sirtuin-type domain. NAD(+)-binding positions include 35-55 (GAGI…TGIY) and 118-121 (QNID). Catalysis depends on His-138, which acts as the Proton acceptor. 4 residues coordinate Zn(2+): Cys-146, Cys-149, Cys-170, and Cys-173. Residues 210–212 (GTS), 235–237 (NRE), and Cys-255 contribute to the NAD(+) site.

Belongs to the sirtuin family. Class I subfamily. The cofactor is Zn(2+).

It localises to the cytoplasm. It is found in the nucleus. It carries out the reaction N(6)-acetyl-L-lysyl-[protein] + NAD(+) + H2O = 2''-O-acetyl-ADP-D-ribose + nicotinamide + L-lysyl-[protein]. Its function is as follows. NAD-dependent histone deacetylase, which could function in telomeric silencing, cell cycle progression and chromosome stability. The protein is NAD-dependent protein deacetylase hst2 (hst2) of Schizosaccharomyces pombe (strain 972 / ATCC 24843) (Fission yeast).